Here is a 353-residue protein sequence, read N- to C-terminus: MTDETKLTYADAGVDIDAGNAMVEAIKPLVRATRRRGADAEIGGFGGLFDLKAAGFTDPILVAANDGVGTKVRIAIETGAHDTIGIDLVAMCVNDLIVQGAEPLFFLDYYASGKLDGAAAAAVVKGIANGCIEAGAALIGGETAEMPGLYAGADYDLAGFAVGAVERGALLPRSDIAAGDVLLGLASSGAHSNGFSLIRKIVAAQKLGWDAPAPYAPGQSLGAALLTPTRIYVKTLLPLLRAQAGIKGLAHITGGGFPDNLPRVLPQGLGVEVDLSAIAVPPVFAWLAEAGHVSAAEMLRTFNCGVGMALICAEADAGALLASLRAAGEQPVALGRVTPAGAERVTYSGRLSL.

The protein belongs to the AIR synthase family.

It localises to the cytoplasm. The enzyme catalyses 2-formamido-N(1)-(5-O-phospho-beta-D-ribosyl)acetamidine + ATP = 5-amino-1-(5-phospho-beta-D-ribosyl)imidazole + ADP + phosphate + H(+). The protein operates within purine metabolism; IMP biosynthesis via de novo pathway; 5-amino-1-(5-phospho-D-ribosyl)imidazole from N(2)-formyl-N(1)-(5-phospho-D-ribosyl)glycinamide: step 2/2. In Methylocella silvestris (strain DSM 15510 / CIP 108128 / LMG 27833 / NCIMB 13906 / BL2), this protein is Phosphoribosylformylglycinamidine cyclo-ligase.